Here is a 202-residue protein sequence, read N- to C-terminus: NADH-quinone oxidoreductase subunit C (202 aa).

Belongs to the complex I 30 kDa subunit family. NDH-1 is composed of 14 different subunits. Subunits NuoB, C, D, E, F, and G constitute the peripheral sector of the complex.

It localises to the cell inner membrane. It carries out the reaction a quinone + NADH + 5 H(+)(in) = a quinol + NAD(+) + 4 H(+)(out). Functionally, NDH-1 shuttles electrons from NADH, via FMN and iron-sulfur (Fe-S) centers, to quinones in the respiratory chain. The immediate electron acceptor for the enzyme in this species is believed to be ubiquinone. Couples the redox reaction to proton translocation (for every two electrons transferred, four hydrogen ions are translocated across the cytoplasmic membrane), and thus conserves the redox energy in a proton gradient. The sequence is that of NADH-quinone oxidoreductase subunit C from Hyphomonas neptunium (strain ATCC 15444).